We begin with the raw amino-acid sequence, 211 residues long: RNA chaperone ProQ (211 aa).

Residues 112-148 (ERRAVEKANNPKANKKRSVHHSGNKSENKKSAGKKFS) form a disordered region. Positions 124–134 (ANKKRSVHHSG) are enriched in basic residues.

Belongs to the ProQ family.

The protein resides in the cytoplasm. Functionally, RNA chaperone with significant RNA binding, RNA strand exchange and RNA duplexing activities. This is RNA chaperone ProQ from Histophilus somni (strain 2336) (Haemophilus somnus).